Consider the following 148-residue polypeptide: Lysozyme C (148 aa).

Residues 1-18 form the signal peptide; sequence MRALIILGLVLLSVTVQG. In terms of domain architecture, C-type lysozyme spans 19-148; it reads KIFERCELAR…VSQYVKGCGV (130 aa). 4 disulfides stabilise this stretch: C24–C146, C48–C134, C83–C99, and C95–C113. Active-site residues include E53 and D71.

Belongs to the glycosyl hydrolase 22 family. As to quaternary structure, monomer.

The protein localises to the secreted. The enzyme catalyses Hydrolysis of (1-&gt;4)-beta-linkages between N-acetylmuramic acid and N-acetyl-D-glucosamine residues in a peptidoglycan and between N-acetyl-D-glucosamine residues in chitodextrins.. In terms of biological role, lysozymes have primarily a bacteriolytic function; those in tissues and body fluids are associated with the monocyte-macrophage system and enhance the activity of immunoagents. Also plays a role in digestion in this species. This chain is Lysozyme C (LYZ), found in Trachypithecus francoisi (Francois' leaf monkey).